Here is a 215-residue protein sequence, read N- to C-terminus: Beta-crystallin A3 (215 aa).

Residues methionine 1 to proline 30 form an N-terminal arm region. Beta/gamma crystallin 'Greek key' domains follow at residues tryptophan 31 to cysteine 70 and glycine 71 to cysteine 117. Positions serine 118 to glutamate 123 are connecting peptide. Beta/gamma crystallin 'Greek key' domains follow at residues serine 124–cysteine 165 and glycine 166–glutamine 214.

The protein belongs to the beta/gamma-crystallin family. Homo/heterodimer, or complexes of higher-order. The structure of beta-crystallin oligomers seems to be stabilized through interactions between the N-terminal arms.

Its function is as follows. Crystallins are the dominant structural components of the vertebrate eye lens. The chain is Beta-crystallin A3 (CRYBA1) from Gallus gallus (Chicken).